A 232-amino-acid polypeptide reads, in one-letter code: Orotidine 5'-phosphate decarboxylase (232 aa).

Residues D14, K36, 63–72 (DLKFHDIPNT), T122, R183, Q192, G212, and R213 contribute to the substrate site. K65 functions as the Proton donor in the catalytic mechanism.

Belongs to the OMP decarboxylase family. Type 1 subfamily. In terms of assembly, homodimer.

The enzyme catalyses orotidine 5'-phosphate + H(+) = UMP + CO2. It functions in the pathway pyrimidine metabolism; UMP biosynthesis via de novo pathway; UMP from orotate: step 2/2. In terms of biological role, catalyzes the decarboxylation of orotidine 5'-monophosphate (OMP) to uridine 5'-monophosphate (UMP). In Psychrobacter arcticus (strain DSM 17307 / VKM B-2377 / 273-4), this protein is Orotidine 5'-phosphate decarboxylase.